A 368-amino-acid polypeptide reads, in one-letter code: 2-aminoethylphosphonate--pyruvate transaminase (368 aa).

The residue at position 192 (K192) is an N6-(pyridoxal phosphate)lysine.

The protein belongs to the class-V pyridoxal-phosphate-dependent aminotransferase family. PhnW subfamily. Homodimer. It depends on pyridoxal 5'-phosphate as a cofactor.

The catalysed reaction is (2-aminoethyl)phosphonate + pyruvate = phosphonoacetaldehyde + L-alanine. Involved in phosphonate degradation. This Pseudomonas putida (strain ATCC 700007 / DSM 6899 / JCM 31910 / BCRC 17059 / LMG 24140 / F1) protein is 2-aminoethylphosphonate--pyruvate transaminase.